Reading from the N-terminus, the 441-residue chain is MASIPTVNVIGAGLAGSEAAWHIANMGVNVRLYEMRPNKMTPAHHTAQFAELVCTNSLRANQLANAAGLLKAEMRQMDSIVMQAAEHHAVPAGGALAVDRDTFSAEITAAITALPNVEIINEEITSLPDGITVVATGPLTAASLAKSIQAFNDEDDLHFFDAAAPILTKDSIDMDKVYLKSRYDRGEAAYLNCPMTEAEFDVFYDALIHAEMAEAHDFENSDVFEGCMPIEVMAQRGRQTMLFGPLKPVGLEDPKTGKQPFAVVQLRQDDAAGDLYNIVGFQTHLKWGEQKRVFSLIPGLENVEFVRYGVMHRNTFMKSPKLLTPTYQTQQRPDLFFAGQMTGVEGYIESAASGIVAGTNAARLALGLEPVVFPTDTMMGAMAHYITHTSASNFQPMNANFGIMPKLKQRIRDKRERNTAISERALADLTTFKDETLTVNN.

An FAD-binding site is contributed by 11-16; it reads GAGLAG.

The protein belongs to the MnmG family. TrmFO subfamily. FAD is required as a cofactor.

The protein localises to the cytoplasm. It carries out the reaction uridine(54) in tRNA + (6R)-5,10-methylene-5,6,7,8-tetrahydrofolate + NADH + H(+) = 5-methyluridine(54) in tRNA + (6S)-5,6,7,8-tetrahydrofolate + NAD(+). The enzyme catalyses uridine(54) in tRNA + (6R)-5,10-methylene-5,6,7,8-tetrahydrofolate + NADPH + H(+) = 5-methyluridine(54) in tRNA + (6S)-5,6,7,8-tetrahydrofolate + NADP(+). In terms of biological role, catalyzes the folate-dependent formation of 5-methyl-uridine at position 54 (M-5-U54) in all tRNAs. The protein is Methylenetetrahydrofolate--tRNA-(uracil-5-)-methyltransferase TrmFO of Lactiplantibacillus plantarum (strain ATCC BAA-793 / NCIMB 8826 / WCFS1) (Lactobacillus plantarum).